A 515-amino-acid chain; its full sequence is Probable malate:quinone oxidoreductase (515 aa).

Belongs to the MQO family. FAD serves as cofactor.

The enzyme catalyses (S)-malate + a quinone = a quinol + oxaloacetate. The protein operates within carbohydrate metabolism; tricarboxylic acid cycle; oxaloacetate from (S)-malate (quinone route): step 1/1. The sequence is that of Probable malate:quinone oxidoreductase from Blochmanniella pennsylvanica (strain BPEN).